Reading from the N-terminus, the 37-residue chain is Neuropeptide Y2-like conopeptide (37 aa).

Tyr37 carries the post-translational modification Tyrosine amide.

It belongs to the NPY family. Expressed by the venom duct.

The protein localises to the secreted. Its function is as follows. Causes hyperactivity such as jumping, rapid circling and tail flicking, after intraventicular injection into mouse brain. This is Neuropeptide Y2-like conopeptide from Conus betulinus (Beech cone).